The primary structure comprises 518 residues: Probable bifunctional methylthioribulose-1-phosphate dehydratase/enolase-phosphatase E1 (518 aa).

The interval 1 to 242 (MACCGGGRGE…AIKLYQLGID (242 aa)) is methylthioribulose-1-phosphate dehydratase. Residue cysteine 114 coordinates substrate. The Zn(2+) site is built by histidine 132 and histidine 134. The Proton donor/acceptor; for methylthioribulose-1-phosphate dehydratase activity role is filled by glutamate 157. Histidine 207 contacts Zn(2+). Residues 279–518 (VVLDIEGTTT…FRTIKSFSEI (240 aa)) are enolase-phosphatase E1. The Mg(2+) site is built by aspartate 282 and glutamate 284. Residues 417–418 (SS) and lysine 451 each bind substrate. Aspartate 477 serves as a coordination point for Mg(2+).

It in the N-terminal section; belongs to the aldolase class II family. MtnB subfamily. This sequence in the C-terminal section; belongs to the HAD-like hydrolase superfamily. MasA/MtnC family. Requires Zn(2+) as cofactor. Mg(2+) is required as a cofactor.

The catalysed reaction is 5-(methylsulfanyl)-D-ribulose 1-phosphate = 5-methylsulfanyl-2,3-dioxopentyl phosphate + H2O. It carries out the reaction 5-methylsulfanyl-2,3-dioxopentyl phosphate + H2O = 1,2-dihydroxy-5-(methylsulfanyl)pent-1-en-3-one + phosphate. It participates in amino-acid biosynthesis; L-methionine biosynthesis via salvage pathway; L-methionine from S-methyl-5-thio-alpha-D-ribose 1-phosphate: step 2/6. The protein operates within amino-acid biosynthesis; L-methionine biosynthesis via salvage pathway; L-methionine from S-methyl-5-thio-alpha-D-ribose 1-phosphate: step 3/6. It functions in the pathway amino-acid biosynthesis; L-methionine biosynthesis via salvage pathway; L-methionine from S-methyl-5-thio-alpha-D-ribose 1-phosphate: step 4/6. The chain is Probable bifunctional methylthioribulose-1-phosphate dehydratase/enolase-phosphatase E1 from Oryza sativa subsp. indica (Rice).